Consider the following 292-residue polypeptide: UTP--glucose-1-phosphate uridylyltransferase (292 aa).

The protein belongs to the UDPGP type 2 family. In terms of assembly, interacts with FloT.

It localises to the cell membrane. The protein resides in the membrane raft. The catalysed reaction is alpha-D-glucose 1-phosphate + UTP + H(+) = UDP-alpha-D-glucose + diphosphate. The protein operates within glycolipid metabolism; diglucosyl-diacylglycerol biosynthesis. Functionally, catalyzes the formation of UDP-glucose from glucose-1-phosphate and UTP. This is an intermediate step in the biosynthesis of diglucosyl-diacylglycerol (Glc2-DAG), i.e. the predominant glycolipid found in B.subtilis membrane, which is also used as a membrane anchor for lipoteichoic acid (LTA). Has a role in the biosynthesis of all phosphate-containing envelope polymers, since UDP-glucose serves as a glucosyl donor not only for the biosynthesis of LTA but also for wall teichoic acids (WTAs). Is required for biofilm formation. This is likely due to another role of UDP-glucose, which might also act as a metabolic signal regulating biofilm formation or may be involved in some unknown biosynthetic pathway essential for biofilm formation, e.g. the synthesis of an exopolysaccharide. The protein is UTP--glucose-1-phosphate uridylyltransferase (gtaB) of Bacillus subtilis (strain 168).